Consider the following 339-residue polypeptide: Putative pectinesterase 10 (339 aa).

A signal peptide spans 1–28 (MKGVTIHNFCYSYFKVCLLVMSLAYGSA). N112 carries an N-linked (GlcNAc...) asparagine glycan. A substrate-binding site is contributed by T116. The active-site Proton donor is D169. The active-site Nucleophile is the D190. Residues R252 and W254 each coordinate substrate. N-linked (GlcNAc...) asparagine glycosylation is present at N322.

This sequence belongs to the pectinesterase family. Expressed in siliques.

Its subcellular location is the secreted. It is found in the cell wall. It carries out the reaction [(1-&gt;4)-alpha-D-galacturonosyl methyl ester](n) + n H2O = [(1-&gt;4)-alpha-D-galacturonosyl](n) + n methanol + n H(+). Its pathway is glycan metabolism; pectin degradation; 2-dehydro-3-deoxy-D-gluconate from pectin: step 1/5. Acts in the modification of cell walls via demethylesterification of cell wall pectin. This is Putative pectinesterase 10 (PME10) from Arabidopsis thaliana (Mouse-ear cress).